Here is a 177-residue protein sequence, read N- to C-terminus: Nucleoside triphosphate/diphosphate phosphatase (177 aa).

The active-site Proton donor is Arg24. Mg(2+)-binding residues include Asn88, Asp104, Asp106, Asp108, Asp121, and Glu124.

It belongs to the Ntdp family. Requires Mg(2+) as cofactor.

It carries out the reaction a ribonucleoside 5'-triphosphate + H2O = a ribonucleoside 5'-diphosphate + phosphate + H(+). It catalyses the reaction a ribonucleoside 5'-diphosphate + H2O = a ribonucleoside 5'-phosphate + phosphate + H(+). Functionally, has nucleoside phosphatase activity towards nucleoside triphosphates and nucleoside diphosphates. The protein is Nucleoside triphosphate/diphosphate phosphatase of Geobacillus sp. (strain WCH70).